A 496-amino-acid polypeptide reads, in one-letter code: Transcription termination factor MTERF9, chloroplastic (496 aa).

Residues 1-44 (MAGFSLYCFKNPRILFTLPSESPLFVLGSDKCSPATRRPSRKTR) constitute a chloroplast transit peptide. Disordered regions lie at residues 57–90 (IINP…DDDW) and 102–155 (YEKK…SWRL). Positions 74–90 (DSDEDDDDDDDDDDDDW) are enriched in acidic residues. Residues 105 to 123 (KKPKSHKQTIAKKSVKKGI) show a composition bias toward basic residues. The segment covering 146–155 (SEKKKESWRL) has biased composition (basic and acidic residues).

It belongs to the mTERF family.

The protein localises to the plastid. It is found in the chloroplast. Its function is as follows. Transcription termination factor required for processing and steady-state levels of plastid transcripts. May play a role in response to abiotic stresses. In Arabidopsis thaliana (Mouse-ear cress), this protein is Transcription termination factor MTERF9, chloroplastic.